Here is a 426-residue protein sequence, read N- to C-terminus: Serine hydroxymethyltransferase (426 aa).

Residues leucine 115 and 119–121 (GHI) contribute to the (6S)-5,6,7,8-tetrahydrofolate site. Residue lysine 225 is modified to N6-(pyridoxal phosphate)lysine.

Belongs to the SHMT family. As to quaternary structure, homodimer. The cofactor is pyridoxal 5'-phosphate.

It localises to the cytoplasm. It functions in the pathway amino-acid biosynthesis; glycine biosynthesis; glycine from L-serine: step 1/1. Its function is as follows. Catalyzes the reversible interconversion of serine and glycine with a modified folate serving as the one-carbon carrier. Also exhibits a pteridine-independent aldolase activity toward beta-hydroxyamino acids, producing glycine and aldehydes, via a retro-aldol mechanism. The protein is Serine hydroxymethyltransferase of Thermoplasma volcanium (strain ATCC 51530 / DSM 4299 / JCM 9571 / NBRC 15438 / GSS1).